Here is a 637-residue protein sequence, read N- to C-terminus: tRNA uridine 5-carboxymethylaminomethyl modification enzyme MnmG (637 aa).

Residues 15–20, Ile-127, and Ser-182 contribute to the FAD site; that span reads GAGHAG. 276 to 290 provides a ligand contact to NAD(+); the sequence is GPRYCPSIEDKIVRF. Position 373 (Gln-373) interacts with FAD.

The protein belongs to the MnmG family. As to quaternary structure, homodimer. Heterotetramer of two MnmE and two MnmG subunits. The cofactor is FAD.

The protein resides in the cytoplasm. In terms of biological role, NAD-binding protein involved in the addition of a carboxymethylaminomethyl (cmnm) group at the wobble position (U34) of certain tRNAs, forming tRNA-cmnm(5)s(2)U34. This Streptococcus pneumoniae (strain Hungary19A-6) protein is tRNA uridine 5-carboxymethylaminomethyl modification enzyme MnmG.